The following is a 336-amino-acid chain: Gastrula zinc finger protein XlCGF57.1 (336 aa).

11 consecutive C2H2-type zinc fingers follow at residues 6-28, 34-56, 62-84, 90-112, 118-140, 146-168, 174-196, 202-224, 230-252, 258-280, and 286-308; these read YTCT…MKIH, FICT…MKTH, FTCT…LTIH, FSCT…MKTH, FTCT…MKTH, FTCT…LKIH, FTCT…MKIH, FSCT…LTMH, FTCT…TKIH, and FSCT…LKIH.

The protein belongs to the krueppel C2H2-type zinc-finger protein family.

The protein localises to the nucleus. In terms of biological role, may be involved in transcriptional regulation. This Xenopus laevis (African clawed frog) protein is Gastrula zinc finger protein XlCGF57.1.